We begin with the raw amino-acid sequence, 303 residues long: Lipoyl synthase (303 aa).

Residues cysteine 34, cysteine 39, cysteine 45, cysteine 60, cysteine 64, cysteine 67, and serine 273 each contribute to the [4Fe-4S] cluster site. A Radical SAM core domain is found at tryptophan 46–leucine 262.

Belongs to the radical SAM superfamily. Lipoyl synthase family. It depends on [4Fe-4S] cluster as a cofactor.

The protein localises to the cytoplasm. The catalysed reaction is [[Fe-S] cluster scaffold protein carrying a second [4Fe-4S](2+) cluster] + N(6)-octanoyl-L-lysyl-[protein] + 2 oxidized [2Fe-2S]-[ferredoxin] + 2 S-adenosyl-L-methionine + 4 H(+) = [[Fe-S] cluster scaffold protein] + N(6)-[(R)-dihydrolipoyl]-L-lysyl-[protein] + 4 Fe(3+) + 2 hydrogen sulfide + 2 5'-deoxyadenosine + 2 L-methionine + 2 reduced [2Fe-2S]-[ferredoxin]. The protein operates within protein modification; protein lipoylation via endogenous pathway; protein N(6)-(lipoyl)lysine from octanoyl-[acyl-carrier-protein]: step 2/2. Catalyzes the radical-mediated insertion of two sulfur atoms into the C-6 and C-8 positions of the octanoyl moiety bound to the lipoyl domains of lipoate-dependent enzymes, thereby converting the octanoylated domains into lipoylated derivatives. The chain is Lipoyl synthase from Rickettsia bellii (strain OSU 85-389).